The chain runs to 1023 residues: Vacuolar membrane protease (1023 aa).

Topologically, residues 1 to 80 (MRAAGCGGTG…FFRSVFGYRK (80 aa)) are cytoplasmic. Residues 17-48 (KLSRSISQHQPKSMPQASVNSEQNPSVPNSPS) show a composition bias toward polar residues. Residues 17–59 (KLSRSISQHQPKSMPQASVNSEQNPSVPNSPSAHKPARSQSAQ) form a disordered region. A helical membrane pass occupies residues 81–101 (TSLTFLVALVFAATLLLSWAD). At 102 to 425 (SSLDFSVDMP…VVFSVSQVVS (324 aa)) the chain is on the vacuolar side. Residues N170 and N200 are each glycosylated (N-linked (GlcNAc...) asparagine). Zn(2+) is bound by residues H214 and D226. The Proton acceptor role is filled by E259. Positions 260, 285, and 357 each coordinate Zn(2+). A helical membrane pass occupies residues 426–446 (ANIALLVVVPVASLLLLFIIF). Over 447–461 (RCNKGWGFNFVNAIK) the chain is Cytoplasmic. A helical transmembrane segment spans residues 462-482 (YPLSLVASVLVLTFVSQVIIV). Residues 483-491 (PSNPFLVNS) lie on the Vacuolar side of the membrane. N490 carries an N-linked (GlcNAc...) asparagine glycan. The helical transmembrane segment at 492–512 (SIGLLVATLFSLFLLLNYIVL) threads the bilayer. The Cytoplasmic segment spans residues 513–529 (NGLNLVFKSFKGHQHDE). Residues 530–550 (KLIVMCESSFLTWILLLWSTV) traverse the membrane as a helical segment. Residues 551–564 (KLSHNKFGDDHTGE) are Vacuolar-facing. A helical transmembrane segment spans residues 565–585 (LFIPILFSLQAVACFLGFLGW). The Cytoplasmic portion of the chain corresponds to 586-643 (CFKPSKKVKVSREEHQPLLSSNGSNYGTQDDDDSLAPSSSLSLQSGFSENCEVHETKS). A compositionally biased stretch (polar residues) spans 604–613 (LSSNGSNYGT). Residues 604-626 (LSSNGSNYGTQDDDDSLAPSSSL) form a disordered region. Residues 644-664 (FSYDWLVQFLVIVPISSLIIF) form a helical membrane-spanning segment. Over 665 to 687 (NSGSLILNGLNKSIQESLSAQNL) the chain is Vacuolar. N675 carries N-linked (GlcNAc...) asparagine glycosylation. Residues 688-708 (IYKFIQIFVIVWSIPFLPFIF) traverse the membrane as a helical segment. At 709-712 (KLNR) the chain is on the cytoplasmic side. A helical transmembrane segment spans residues 713-733 (IIVLALSLVLLYGFFAVNITD). Residues 734–1023 (AFNDANPLKL…MVSVTKYIEV (290 aa)) lie on the Vacuolar side of the membrane. Residues N815, N858, and N892 are each glycosylated (N-linked (GlcNAc...) asparagine).

Belongs to the peptidase M28 family. Zn(2+) is required as a cofactor.

It is found in the vacuole membrane. May be involved in vacuolar sorting and osmoregulation. The protein is Vacuolar membrane protease of Clavispora lusitaniae (strain ATCC 42720) (Yeast).